A 382-amino-acid chain; its full sequence is 1-deoxy-D-xylulose 5-phosphate reductoisomerase (382 aa).

The NADPH site is built by threonine 10, glycine 11, serine 12, isoleucine 13, glycine 36, and asparagine 122. 1-deoxy-D-xylulose 5-phosphate is bound at residue lysine 123. An NADPH-binding site is contributed by glutamate 124. Aspartate 148 lines the Mn(2+) pocket. 1-deoxy-D-xylulose 5-phosphate is bound by residues serine 149, glutamate 150, serine 174, and histidine 197. Position 150 (glutamate 150) interacts with Mn(2+). Glycine 203 lines the NADPH pocket. 4 residues coordinate 1-deoxy-D-xylulose 5-phosphate: serine 210, asparagine 215, lysine 216, and glutamate 219. Glutamate 219 lines the Mn(2+) pocket.

The protein belongs to the DXR family. It depends on Mg(2+) as a cofactor. The cofactor is Mn(2+).

It carries out the reaction 2-C-methyl-D-erythritol 4-phosphate + NADP(+) = 1-deoxy-D-xylulose 5-phosphate + NADPH + H(+). It functions in the pathway isoprenoid biosynthesis; isopentenyl diphosphate biosynthesis via DXP pathway; isopentenyl diphosphate from 1-deoxy-D-xylulose 5-phosphate: step 1/6. In terms of biological role, catalyzes the NADPH-dependent rearrangement and reduction of 1-deoxy-D-xylulose-5-phosphate (DXP) to 2-C-methyl-D-erythritol 4-phosphate (MEP). The chain is 1-deoxy-D-xylulose 5-phosphate reductoisomerase from Chlorobaculum tepidum (strain ATCC 49652 / DSM 12025 / NBRC 103806 / TLS) (Chlorobium tepidum).